The sequence spans 631 residues: PTS system glucosamine-specific EIICBA component (631 aa).

The PTS EIIC type-1 domain occupies 3–382 (KKAFQILQQL…WNLKTPGRET (380 aa)). 8 consecutive transmembrane segments (helical) span residues 12 to 32 (LGRA…LLRF), 56 to 76 (LIFA…AGLA), 106 to 126 (HLID…AYLY), 149 to 169 (IITS…WPLI), 196 to 216 (LLIP…MMGE), 243 to 263 (FMMG…LAII), 298 to 318 (FLFV…VIFV), and 350 to 370 (VVIP…RFAI). The PTS EIIB type-1 domain maps to 397-478 (DQLAFHVLQA…KTIMAGGVPA (82 aa)). Cys-419 acts as the Phosphocysteine intermediate; for EIIB activity in catalysis. At Cys-419 the chain carries Phosphocysteine. Residues 515–619 (DQVFSEKMMG…SAITPVIFTN (105 aa)) enclose the PTS EIIA type-1 domain. His-567 serves as the catalytic Tele-phosphohistidine intermediate; for EIIA activity. His-567 carries the post-translational modification Phosphohistidine.

The protein resides in the cell membrane. It catalyses the reaction D-glucosamine(out) + N(pros)-phospho-L-histidyl-[protein] = D-glucosamine 6-phosphate(in) + L-histidyl-[protein]. Its function is as follows. The phosphoenolpyruvate-dependent sugar phosphotransferase system (sugar PTS), a major carbohydrate active transport system, catalyzes the phosphorylation of incoming sugar substrates concomitantly with their translocation across the cell membrane. This system is involved in glucosamine transport. In vitro, when expressed in the absence of GamR and NagP, can transport N-acetylglucosamine. Functionally, in addition, plays an important role in the phosphorylation of EIIA-deficient PTS transporters. The EIIA domain can transfer a phosphoryl group to EIIA-deficient PTS transporters, enabling growth with maltose, N-acetylglucosamine, sucrose or trehalose as the sole carbon source. This Bacillus subtilis (strain 168) protein is PTS system glucosamine-specific EIICBA component.